A 466-amino-acid polypeptide reads, in one-letter code: 3-isopropylmalate dehydratase large subunit (466 aa).

Residues C347, C407, and C410 each contribute to the [4Fe-4S] cluster site.

This sequence belongs to the aconitase/IPM isomerase family. LeuC type 1 subfamily. As to quaternary structure, heterodimer of LeuC and LeuD. The cofactor is [4Fe-4S] cluster.

It catalyses the reaction (2R,3S)-3-isopropylmalate = (2S)-2-isopropylmalate. Its pathway is amino-acid biosynthesis; L-leucine biosynthesis; L-leucine from 3-methyl-2-oxobutanoate: step 2/4. Its function is as follows. Catalyzes the isomerization between 2-isopropylmalate and 3-isopropylmalate, via the formation of 2-isopropylmaleate. This chain is 3-isopropylmalate dehydratase large subunit, found in Escherichia coli O157:H7.